The chain runs to 491 residues: Probable glycogen synthase 2 (491 aa).

Lys15 is a binding site for ADP-alpha-D-glucose.

This sequence belongs to the glycosyltransferase 1 family. Bacterial/plant glycogen synthase subfamily.

It catalyses the reaction [(1-&gt;4)-alpha-D-glucosyl](n) + ADP-alpha-D-glucose = [(1-&gt;4)-alpha-D-glucosyl](n+1) + ADP + H(+). The protein operates within glycan biosynthesis; glycogen biosynthesis. Synthesizes alpha-1,4-glucan chains using ADP-glucose. The polypeptide is Probable glycogen synthase 2 (glgA2) (Synechocystis sp. (strain ATCC 27184 / PCC 6803 / Kazusa)).